A 240-amino-acid chain; its full sequence is Large ribosomal subunit protein uL2 (240 aa).

A compositionally biased stretch (polar residues) spans 1–10 (MGHRISTQSR). Disordered regions lie at residues 1–20 (MGHR…YRAP) and 204–240 (FGGG…GYRR).

Belongs to the universal ribosomal protein uL2 family. In terms of assembly, part of the 50S ribosomal subunit. Forms a bridge to the 30S subunit in the 70S ribosome.

One of the primary rRNA binding proteins. Required for association of the 30S and 50S subunits to form the 70S ribosome, for tRNA binding and peptide bond formation. It has been suggested to have peptidyltransferase activity; this is somewhat controversial. Makes several contacts with the 16S rRNA in the 70S ribosome. The polypeptide is Large ribosomal subunit protein uL2 (Methanocorpusculum labreanum (strain ATCC 43576 / DSM 4855 / Z)).